The primary structure comprises 85 residues: Toxin TdNa8 (85 aa).

Positions 1–19 are cleaved as a signal peptide; it reads MNYLTLIAAASLLTAGTES. Residues 21–81 enclose the LCN-type CS-alpha/beta domain; it reads KDGYPVKEGD…AAIKGYGRCR (61 aa). 4 disulfides stabilise this stretch: cysteine 31–cysteine 80, cysteine 35–cysteine 56, cysteine 42–cysteine 63, and cysteine 46–cysteine 65. The residue at position 82 (proline 82) is a Proline amide.

It belongs to the long (4 C-C) scorpion toxin superfamily. Sodium channel inhibitor family. Alpha subfamily. As to expression, expressed by the venom gland.

Its subcellular location is the secreted. Functionally, alpha toxins bind voltage-independently at site-3 of sodium channels (Nav) and inhibit the inactivation of the activated channels, thereby blocking neuronal transmission. In Tityus discrepans (Venezuelan scorpion), this protein is Toxin TdNa8.